We begin with the raw amino-acid sequence, 161 residues long: Cyclic pyranopterin monophosphate synthase (161 aa).

Residues 78 to 80 (LCH) and 116 to 117 (ME) contribute to the substrate site. Asp131 is an active-site residue.

The protein belongs to the MoaC family. As to quaternary structure, homohexamer; trimer of dimers.

The enzyme catalyses (8S)-3',8-cyclo-7,8-dihydroguanosine 5'-triphosphate = cyclic pyranopterin phosphate + diphosphate. It functions in the pathway cofactor biosynthesis; molybdopterin biosynthesis. Functionally, catalyzes the conversion of (8S)-3',8-cyclo-7,8-dihydroguanosine 5'-triphosphate to cyclic pyranopterin monophosphate (cPMP). This chain is Cyclic pyranopterin monophosphate synthase, found in Bordetella pertussis (strain Tohama I / ATCC BAA-589 / NCTC 13251).